Consider the following 351-residue polypeptide: MKALAKLKKQPGIWIINDAPIPEYGYNDVLIKIKKTAICGTDLHIYNWDKWSQNTIPVPMITGHEFAGEVVAKGDGVTSVDIGDRVSGEGHLVCGQCRNCRAGKRHLCRKTIGIGVNVQGAFAEYLVMPAVNVFKIPDSISDDIASTFDPMGNAIHTALSFNLTGEDVLITGAGPIGLMAVKIARFCGARRIVITDINEYRLQMARDFGATVALNVAPFKNQDELVKQMRKVMSDIGMTEGFDVGLEMSGINSAISMMLDVMNHGGKLSLLGISAGDISVDWGAILFKGLTLKGIYGREMFETWYLMTSMLQAGMDMNPIITHRLHIDEFQKGFEIMKSGQCGKVILDWSS.

C39 is a Zn(2+) binding site. Residues T41 and H44 each act as charge relay system in the active site. Zn(2+) contacts are provided by H64, E65, C94, C97, C100, and C108. NAD(+) contacts are provided by residues I176, D196, R201, 271 to 273 (LGI), and 295 to 296 (IY).

This sequence belongs to the zinc-containing alcohol dehydrogenase family. Homotetramer. It depends on Zn(2+) as a cofactor.

It is found in the cytoplasm. The enzyme catalyses L-threonine + NAD(+) = (2S)-2-amino-3-oxobutanoate + NADH + H(+). Its pathway is amino-acid degradation; L-threonine degradation via oxydo-reductase pathway; glycine from L-threonine: step 1/2. Its function is as follows. Catalyzes the NAD(+)-dependent oxidation of L-threonine to 2-amino-3-ketobutyrate. This is L-threonine 3-dehydrogenase from Francisella tularensis subsp. tularensis (strain SCHU S4 / Schu 4).